The primary structure comprises 439 residues: Serine--tRNA ligase (439 aa).

Residue 247 to 249 coordinates L-serine; the sequence is TSE. An ATP-binding site is contributed by 278–280; that stretch reads RSE. Glutamate 301 provides a ligand contact to L-serine. Residue 365 to 368 participates in ATP binding; it reads EISS. L-serine is bound at residue serine 400.

This sequence belongs to the class-II aminoacyl-tRNA synthetase family. Type-1 seryl-tRNA synthetase subfamily. Homodimer. The tRNA molecule binds across the dimer.

The protein resides in the cytoplasm. It carries out the reaction tRNA(Ser) + L-serine + ATP = L-seryl-tRNA(Ser) + AMP + diphosphate + H(+). It catalyses the reaction tRNA(Sec) + L-serine + ATP = L-seryl-tRNA(Sec) + AMP + diphosphate + H(+). The protein operates within aminoacyl-tRNA biosynthesis; selenocysteinyl-tRNA(Sec) biosynthesis; L-seryl-tRNA(Sec) from L-serine and tRNA(Sec): step 1/1. Functionally, catalyzes the attachment of serine to tRNA(Ser). Is also able to aminoacylate tRNA(Sec) with serine, to form the misacylated tRNA L-seryl-tRNA(Sec), which will be further converted into selenocysteinyl-tRNA(Sec). The chain is Serine--tRNA ligase from Paracidovorax citrulli (strain AAC00-1) (Acidovorax citrulli).